The sequence spans 465 residues: UDP-N-acetylmuramate--L-alanine ligase (465 aa).

Gly118–Thr124 lines the ATP pocket.

Belongs to the MurCDEF family.

It localises to the cytoplasm. The enzyme catalyses UDP-N-acetyl-alpha-D-muramate + L-alanine + ATP = UDP-N-acetyl-alpha-D-muramoyl-L-alanine + ADP + phosphate + H(+). It participates in cell wall biogenesis; peptidoglycan biosynthesis. Its function is as follows. Cell wall formation. In Ruegeria pomeroyi (strain ATCC 700808 / DSM 15171 / DSS-3) (Silicibacter pomeroyi), this protein is UDP-N-acetylmuramate--L-alanine ligase.